Here is a 326-residue protein sequence, read N- to C-terminus: Archaeal actin homolog (326 aa).

ATP-binding positions include 10-14 (YGDTK), Ser-179, Gln-231, 285-288 (GGAN), and Gln-311.

It belongs to the thermophilic archaeal actin family.

Its function is as follows. Polymerizes into bundles of filaments. Polymerization requires NTP and is optimal with ATP, but GTP, UTP, CTP, and even the deoxy form of NTP can also support the polymerization reaction. The protein is Archaeal actin homolog of Thermoplasma volcanium (strain ATCC 51530 / DSM 4299 / JCM 9571 / NBRC 15438 / GSS1).